A 246-amino-acid chain; its full sequence is Probable transcriptional regulatory protein CLB_3102 (246 aa).

It belongs to the TACO1 family.

It localises to the cytoplasm. The polypeptide is Probable transcriptional regulatory protein CLB_3102 (Clostridium botulinum (strain ATCC 19397 / Type A)).